The chain runs to 135 residues: M-zodatoxin-Lt8q (135 aa).

The first 20 residues, 1–20 (MKYFVVALALVAAFACIAES), serve as a signal peptide directing secretion. A propeptide spanning residues 21 to 60 (KPAESEHELAEVEEENELADLEDAVWLEHLADLSDLEEAR) is cleaved from the precursor.

This sequence belongs to the cationic peptide 06 (cytoinsectotoxin) family. Expressed by the venom gland.

It is found in the secreted. Functionally, insecticidal, cytolytic and antimicrobial peptide. Forms voltage-dependent, ion-permeable channels in membranes. At high concentration causes cell membrane lysis. The polypeptide is M-zodatoxin-Lt8q (cit 1-16) (Lachesana tarabaevi (Spider)).